We begin with the raw amino-acid sequence, 400 residues long: MAKEKFVRTKPHVNVGTIGHIDHGKSTLTAAITKYLSLKGLAQYVPYDQIDKAPEEKARGITINITHVEYQTEKRHYAHIDCPGHADYIKNMITGAAQMDGAILVVAATDGPMPQTREHVLLARQVEVPYMIVFINKTDMVDDPELIDLVEMEVRDLLSQYGYPGDEVPVIRGSALKAVEAPNDPNHEAYKPIQELLDAMDNYIPEPQREVDKPFLMPIEDVFSITGRGTVVTGRIERGRIKPGDEVEIIGLSYEIRKTVVTSVEMFRKELDEGIAGDNVGCLLRGIDKDEVERGQVLAAPGSIKPHKRFKAQVYVLKKEEGGRHTPFTKGYKPQFYIRTADVTGEIVGLPEGVEMVMPGDHVEMEIELIYPVAIEKGQRFAVREGGRTVGAGVVTEVIE.

The tr-type G domain maps to Lys-10–Gln-208. The G1 stretch occupies residues Gly-19–Ser-26. Position 19–26 (Gly-19–Ser-26) interacts with GTP. Position 26 (Ser-26) interacts with Mg(2+). Residues Gly-60–Asn-64 are G2. The interval Asp-81–Gly-84 is G3. Residues Asp-81–His-85 and Asn-136–Asp-139 each bind GTP. A G4 region spans residues Asn-136 to Asp-139. The tract at residues Ser-174–Leu-176 is G5.

Belongs to the TRAFAC class translation factor GTPase superfamily. Classic translation factor GTPase family. EF-Tu/EF-1A subfamily. Monomer.

Its subcellular location is the cytoplasm. The catalysed reaction is GTP + H2O = GDP + phosphate + H(+). In terms of biological role, GTP hydrolase that promotes the GTP-dependent binding of aminoacyl-tRNA to the A-site of ribosomes during protein biosynthesis. In Thermotoga petrophila (strain ATCC BAA-488 / DSM 13995 / JCM 10881 / RKU-1), this protein is Elongation factor Tu.